Reading from the N-terminus, the 321-residue chain is Transaldolase (321 aa).

Lysine 132 acts as the Schiff-base intermediate with substrate in catalysis.

The protein belongs to the transaldolase family. Type 1 subfamily. In terms of assembly, homodimer.

The protein localises to the cytoplasm. It carries out the reaction D-sedoheptulose 7-phosphate + D-glyceraldehyde 3-phosphate = D-erythrose 4-phosphate + beta-D-fructose 6-phosphate. Its pathway is carbohydrate degradation; pentose phosphate pathway; D-glyceraldehyde 3-phosphate and beta-D-fructose 6-phosphate from D-ribose 5-phosphate and D-xylulose 5-phosphate (non-oxidative stage): step 2/3. Functionally, transaldolase is important for the balance of metabolites in the pentose-phosphate pathway. The protein is Transaldolase of Rhizobium etli (strain ATCC 51251 / DSM 11541 / JCM 21823 / NBRC 15573 / CFN 42).